Consider the following 328-residue polypeptide: Malate dehydrogenase (328 aa).

11-17 serves as a coordination point for NAD(+); that stretch reads GAAGQIG. Residues arginine 94 and arginine 100 each coordinate substrate. NAD(+) is bound by residues asparagine 107, glutamine 114, and 131–133; that span reads VGN. Asparagine 133 and arginine 164 together coordinate substrate. The active-site Proton acceptor is the histidine 189.

It belongs to the LDH/MDH superfamily. MDH type 2 family.

The enzyme catalyses (S)-malate + NAD(+) = oxaloacetate + NADH + H(+). In terms of biological role, catalyzes the reversible oxidation of malate to oxaloacetate. This is Malate dehydrogenase from Xanthomonas campestris pv. campestris (strain B100).